Consider the following 337-residue polypeptide: 1-aminocyclopropane-1-carboxylate deaminase (337 aa).

Position 50 is an N6-(pyridoxal phosphate)lysine (K50). The active-site Nucleophile is the S77.

The protein belongs to the ACC deaminase/D-cysteine desulfhydrase family. As to quaternary structure, homotrimer. Pyridoxal 5'-phosphate serves as cofactor.

It carries out the reaction 1-aminocyclopropane-1-carboxylate + H2O = 2-oxobutanoate + NH4(+). In terms of biological role, catalyzes a cyclopropane ring-opening reaction, the irreversible conversion of 1-aminocyclopropane-1-carboxylate (ACC) to ammonia and alpha-ketobutyrate. Allows growth on ACC as a nitrogen source. The sequence is that of 1-aminocyclopropane-1-carboxylate deaminase from Bradyrhizobium diazoefficiens (strain JCM 10833 / BCRC 13528 / IAM 13628 / NBRC 14792 / USDA 110).